Consider the following 64-residue polypeptide: Large ribosomal subunit protein bL28 (64 aa).

It belongs to the bacterial ribosomal protein bL28 family.

The chain is Large ribosomal subunit protein bL28 from Trichlorobacter lovleyi (strain ATCC BAA-1151 / DSM 17278 / SZ) (Geobacter lovleyi).